The following is a 708-amino-acid chain: DNA ligase 2 (708 aa).

NAD(+) is bound by residues 71–75 (DADYD), 121–122 (SL), and Glu153. The N6-AMP-lysine intermediate role is filled by Lys155. NAD(+) is bound by residues Arg176, Glu213, Lys330, and Lys354. Positions 448, 451, 466, and 471 each coordinate Zn(2+). Residues 627 to 708 (ADAGTLAGKE…LLRLAEAAPE (82 aa)) enclose the BRCT domain.

Belongs to the NAD-dependent DNA ligase family. LigA subfamily. It depends on Mg(2+) as a cofactor. The cofactor is Mn(2+).

The enzyme catalyses NAD(+) + (deoxyribonucleotide)n-3'-hydroxyl + 5'-phospho-(deoxyribonucleotide)m = (deoxyribonucleotide)n+m + AMP + beta-nicotinamide D-nucleotide.. In terms of biological role, DNA ligase that catalyzes the formation of phosphodiester linkages between 5'-phosphoryl and 3'-hydroxyl groups in double-stranded DNA using NAD as a coenzyme and as the energy source for the reaction. It is essential for DNA replication and repair of damaged DNA. This is DNA ligase 2 from Opitutus terrae (strain DSM 11246 / JCM 15787 / PB90-1).